The following is a 1032-amino-acid chain: Protein translocase subunit SecA (1032 aa).

Residues glutamine 121, 139-143 (GEGKT), and aspartate 570 each bind ATP. Residues 945 to 975 (TAGGSENATEDAPKPAKRGVGGAARRVSNAA) form a disordered region. Positions 994, 996, 1005, and 1006 each coordinate Zn(2+).

This sequence belongs to the SecA family. Monomer and homodimer. Part of the essential Sec protein translocation apparatus which comprises SecA, SecYEG and auxiliary proteins SecDF. Other proteins may also be involved. Requires Zn(2+) as cofactor.

It localises to the cell membrane. Its subcellular location is the cytoplasm. The catalysed reaction is ATP + H2O + cellular proteinSide 1 = ADP + phosphate + cellular proteinSide 2.. Functionally, part of the Sec protein translocase complex. Interacts with the SecYEG preprotein conducting channel. Has a central role in coupling the hydrolysis of ATP to the transfer of proteins into and across the cell membrane, serving as an ATP-driven molecular motor driving the stepwise translocation of polypeptide chains across the membrane. This Herpetosiphon aurantiacus (strain ATCC 23779 / DSM 785 / 114-95) protein is Protein translocase subunit SecA.